A 312-amino-acid chain; its full sequence is tRNA dimethylallyltransferase (312 aa).

Residue 15 to 22 (GPTAAGKS) coordinates ATP. Substrate is bound at residue 17-22 (TAAGKS). Residues 40 to 43 (DSMQ) form an interaction with substrate tRNA region.

Belongs to the IPP transferase family. Monomer. Requires Mg(2+) as cofactor.

It carries out the reaction adenosine(37) in tRNA + dimethylallyl diphosphate = N(6)-dimethylallyladenosine(37) in tRNA + diphosphate. Its function is as follows. Catalyzes the transfer of a dimethylallyl group onto the adenine at position 37 in tRNAs that read codons beginning with uridine, leading to the formation of N6-(dimethylallyl)adenosine (i(6)A). This chain is tRNA dimethylallyltransferase, found in Streptomyces griseus subsp. griseus (strain JCM 4626 / CBS 651.72 / NBRC 13350 / KCC S-0626 / ISP 5235).